Consider the following 201-residue polypeptide: Homeobox protein ceh-28 (201 aa).

Positions 72–84 (SYYSSPSQNQRSY) are enriched in polar residues. The segment at 72 to 94 (SYYSSPSQNQRSYQNHRQHSNPD) is disordered. A DNA-binding region (homeobox) is located at residues 104–163 (KRKPRVLFTQHQVNELEERFKKQRYVTATEREELAQCLGLTATQVKIWFQNRRYKCKRLA).

It belongs to the NK-2 homeobox family.

The protein localises to the nucleus. Its function is as follows. Probable transcription factor that regulates neuronal differention, including synapse assembly of the cholinergic motor neuron M4. Activates expression of growth factor, neuropeptide and transcription factor genes, such as TGF-beta dbl-1, FMRFamide-like flp-5 and transcription repressor zag-1, in the M4 neuron. Required for pharynx peristalsis. The polypeptide is Homeobox protein ceh-28 (Caenorhabditis elegans).